A 957-amino-acid polypeptide reads, in one-letter code: Glycine dehydrogenase (decarboxylating) (957 aa).

Residue Lys708 is modified to N6-(pyridoxal phosphate)lysine.

The protein belongs to the GcvP family. The glycine cleavage system is composed of four proteins: P, T, L and H. Pyridoxal 5'-phosphate serves as cofactor.

The enzyme catalyses N(6)-[(R)-lipoyl]-L-lysyl-[glycine-cleavage complex H protein] + glycine + H(+) = N(6)-[(R)-S(8)-aminomethyldihydrolipoyl]-L-lysyl-[glycine-cleavage complex H protein] + CO2. The glycine cleavage system catalyzes the degradation of glycine. The P protein binds the alpha-amino group of glycine through its pyridoxal phosphate cofactor; CO(2) is released and the remaining methylamine moiety is then transferred to the lipoamide cofactor of the H protein. The chain is Glycine dehydrogenase (decarboxylating) from Salmonella newport (strain SL254).